Reading from the N-terminus, the 73-residue chain is Small ribosomal subunit protein bS18 (73 aa).

This sequence belongs to the bacterial ribosomal protein bS18 family. Part of the 30S ribosomal subunit. Forms a tight heterodimer with protein bS6.

Its function is as follows. Binds as a heterodimer with protein bS6 to the central domain of the 16S rRNA, where it helps stabilize the platform of the 30S subunit. This Prochlorococcus marinus (strain NATL2A) protein is Small ribosomal subunit protein bS18.